A 1293-amino-acid polypeptide reads, in one-letter code: MFGFLIGVFFDRREESKCEPLVKHAPAIEPEASEAENYPLSSSADDKILAEALDAVETTILGSGSCLHVTDTAAMPPAGDSAAAAVMMGSHSPGDRLMIEALESVEASRGLTHSADTCSQRCSIALSAPQSPQSRVPEGPIMDSGQIFAVSGAGEEENWIDDEDMALCAADLQIDPIGDAQSVGGSTAACLPPSQKEEIRILYATDGYPVVCSLHLLLGQALLQELYVIAYSHVTEPSAHGGGLLRATFYLLAATGCERQRQRVRPVFVCSFTGEAADKTREALREGKPLMVQDVIASLDEAQSLALHEDLIIALGTICSAGKTAAAPGGDERNLSYNYVASTLPGLRRTLASLMLQYETRVVAAFRRKYNASFSCPFWFVSKFGPSETSLVAVLRYYLLGATQDDGIAGSFDLQGVKDLAVTFPKPGANASGLTAARLNTFAEFSRFWCCSELAGPKAEKLFREYLKTRVSSDTLYVQSLDSLIEKYRHALRLPAKDFVRFVYLAYHEGYNRAAVEAHMEEALRNGGRAETAATRAQSEFFKGLREMCSMPEYFARNVDVAVKRLPVRVAEEHARLRSYGEIPRSGFWGFCWPSYDVSLRINKICAGPLCCLGTQLADAMVRAPPDDGDKGTCAETAATIIHHDSDASGEEEATVKVCGAHMPRANKRAGDGTRISPACNEADTRAPLARLTALAYSDQRPRGIMPVTLLLYSLDDTSSGADTAVKSEAKAQDRPVPVYRVAMPGGGQAFAVVARDQWDKTVTVDVFSGFMAPKSPPESNGPLGSDKDAAAVDDAWTRALLARAWGTSYARRCAANVGASQLYLNRNEVLSDSLAVCNLPLDLDITLKPSSVGRPSMLTLHMAMRSVREAIVLLWSLLFADAEIDPDTYPVYFYKTQCDAAAGDEEASPQRRGVGGGDDDVAWGEEDVEIEEMWGGYYSQTAMNDDMIWDDAPDPQMDIDSDHPAHEPMDDGAGAAIEEMKTAAAARFCRCERKIGFRICVPIPKPYALAGLSVAKATSALVQQAIVLQEKFVEALDQFIADYEFVDSGVYSAGRSLRLPFFAKVNARGVMVGRLLPFLVFPPKCRDRSEFVAQHADPNNFHVGAARRDNPAPTLIITSVTVRRDVLAQDNRAHGKPRAGTARLADALAAVGIVPGNQQGTPGDACAVDASWLLDSVAMPALREYIDEHFPRHAAEYRDARTDCIRVYEGRICAALRRGGAGYMSGRRSNFTCLKYQHRGASMQTVIASVVVAVNSQGLPYAALQTRCFATKCGSNELQTQFTVTLSATKDV.

The CHC2-type zinc finger occupies 1234-1274 (CLKYQHRGASMQTVIASVVVAVNSQGLPYAALQTRCFATKC).

The protein belongs to the herpesviridae DNA primase family. In terms of assembly, associates with the helicase and the primase-associated factor to form the helicase-primase factor.

It localises to the host nucleus. Its function is as follows. Essential component of the helicase/primase complex. Unwinds the DNA at the replication forks and generates single-stranded DNA for both leading and lagging strand synthesis. The primase initiates primer synthesis and thereby produces large amount of short RNA primers on the lagging strand that the polymerase elongates using dNTPs. This chain is DNA primase (UL52), found in Psittacid herpesvirus 1 (isolate Amazon parrot/-/97-0001/1997) (PsHV-1).